A 510-amino-acid chain; its full sequence is Archaeal glutamate synthase [NADPH] (510 aa).

2 4Fe-4S ferredoxin-type domains span residues tyrosine 10–glutamate 37 and glycine 38–asparagine 68. Cysteine 19, cysteine 22, cysteine 25, cysteine 29, cysteine 48, cysteine 51, cysteine 54, and cysteine 58 together coordinate [4Fe-4S] cluster.

Belongs to the glutamate synthase family. FMN is required as a cofactor.

The enzyme catalyses 2 L-glutamate + NADP(+) = L-glutamine + 2-oxoglutarate + NADPH + H(+). The protein is Archaeal glutamate synthase [NADPH] of Methanocaldococcus jannaschii (strain ATCC 43067 / DSM 2661 / JAL-1 / JCM 10045 / NBRC 100440) (Methanococcus jannaschii).